Reading from the N-terminus, the 95-residue chain is MTTELLSDEQIATALQDLPDWTRSGDEISRTVQAESFPAAIALVDRVAEAAERAGHHPDIDIRWRTVTFTLSTHSAGGLTGRDIDLARQIDELAR.

The protein belongs to the pterin-4-alpha-carbinolamine dehydratase family.

It carries out the reaction (4aS,6R)-4a-hydroxy-L-erythro-5,6,7,8-tetrahydrobiopterin = (6R)-L-erythro-6,7-dihydrobiopterin + H2O. The sequence is that of Putative pterin-4-alpha-carbinolamine dehydratase from Nocardia farcinica (strain IFM 10152).